A 734-amino-acid polypeptide reads, in one-letter code: 5-methyltetrahydropteroyltriglutamate--homocysteine methyltransferase (734 aa).

Residues 15-18 and Lys104 each bind 5-methyltetrahydropteroyltri-L-glutamate; that span reads REFK. Residues 409–411 and Glu462 contribute to the L-homocysteine site; that span reads IGS. L-methionine contacts are provided by residues 409 to 411 and Glu462; that span reads IGS. Residues 493–494 and Trp539 each bind 5-methyltetrahydropteroyltri-L-glutamate; that span reads RC. Residue Asp577 participates in L-homocysteine binding. Asp577 is an L-methionine binding site. Glu583 is a binding site for 5-methyltetrahydropteroyltri-L-glutamate. His618, Cys620, and Glu642 together coordinate Zn(2+). His672 serves as the catalytic Proton donor. Cys704 lines the Zn(2+) pocket.

Belongs to the vitamin-B12 independent methionine synthase family. Zn(2+) serves as cofactor.

It carries out the reaction 5-methyltetrahydropteroyltri-L-glutamate + L-homocysteine = tetrahydropteroyltri-L-glutamate + L-methionine. It functions in the pathway amino-acid biosynthesis; L-methionine biosynthesis via de novo pathway; L-methionine from L-homocysteine (MetE route): step 1/1. In terms of biological role, catalyzes the transfer of a methyl group from 5-methyltetrahydrofolate to homocysteine resulting in methionine formation. The polypeptide is 5-methyltetrahydropteroyltriglutamate--homocysteine methyltransferase (Thermotoga maritima (strain ATCC 43589 / DSM 3109 / JCM 10099 / NBRC 100826 / MSB8)).